Consider the following 172-residue polypeptide: MSSKRAKTKTTKKRPQRATSNVFAMFDQSQIQEFKEAFNMIDQNRDGFIDKEDLHDMLASMGKNPTDEYLDAMMNEAPGPINFTMFLTMFGEKLNGTDPEDVIRNAFACFDEEAIGTIQEDYLRELLTTMGDRFTDEEVDELYREAPIDKKGNFNYIEFTRILKHGAKDKDD.

Residues 1-16 show a composition bias toward basic residues; that stretch reads MSSKRAKTKTTKKRPQ. The segment at 1 to 20 is disordered; the sequence is MSSKRAKTKTTKKRPQRATS. The residue at position 19 (threonine 19) is a Phosphothreonine; by MLCK. Serine 20 bears the Phosphoserine; by MLCK mark. EF-hand domains follow at residues 29–64, 98–133, and 134–169; these read SQIQEFKEAFNMIDQNRDGFIDKEDLHDMLASMGKN, DPEDVIRNAFACFDEEAIGTIQEDYLRELLTTMGDR, and FTDEEVDELYREAPIDKKGNFNYIEFTRILKHGAKD. Residues aspartate 42, asparagine 44, aspartate 46, and aspartate 53 each contribute to the Ca(2+) site.

Myosin is a hexamer of 2 heavy chains and 4 light chains. In terms of processing, phosphorylation increases the actin-activated myosin ATPase activity and thereby regulates the contractile activity.

Functionally, myosin regulatory subunit that plays an important role in regulation of both smooth muscle and nonmuscle cell contractile activity via its phosphorylation. Implicated in cytokinesis, receptor capping, and cell locomotion. This Rattus norvegicus (Rat) protein is Myosin regulatory light chain RLC-A (Rlc-a).